The sequence spans 140 residues: Large ribosomal subunit protein uL16c (140 aa).

It belongs to the universal ribosomal protein uL16 family. In terms of assembly, part of the 50S ribosomal subunit.

It localises to the plastid. It is found in the chloroplast. The protein is Large ribosomal subunit protein uL16c of Psilotum nudum (Whisk fern).